A 484-amino-acid polypeptide reads, in one-letter code: Dual specificity protein kinase CLK1 (484 aa).

The disordered stretch occupies residues 1-42 (MRHSKRTYCPDWDDKDWDYGKWRSSSSHKRRKRSHSSAQENK). A compositionally biased stretch (basic residues) spans 26–35 (SSHKRRKRSH). Ser61 carries the post-translational modification Phosphoserine. A disordered region spans residues 79–146 (DYTQGCEPGH…RTRSVEDDEE (68 aa)). Basic and acidic residues predominate over residues 86-97 (PGHRQRDHESRY). Residues 100-112 (HSSKSSGRSGRSS) are compositionally biased toward low complexity. Residues 113-138 (YKSKHRIHHSTSHRRSHGKSHRRKRT) show a composition bias toward basic residues. At Thr138 the chain carries Phosphothreonine. Ser140 is modified (phosphoserine). Positions 161-477 (YEIVDTLGEG…LREALKHPFF (317 aa)) constitute a Protein kinase domain. Residues 167–175 (LGEGAFGKV) and Lys191 contribute to the ATP site. The active-site Proton acceptor is Asp288.

The protein belongs to the protein kinase superfamily. CMGC Ser/Thr protein kinase family. Lammer subfamily. Interacts with PPIG and UBL5. Autophosphorylates on all three types of residues. In terms of tissue distribution, endothelial cells.

It localises to the nucleus. It catalyses the reaction L-seryl-[protein] + ATP = O-phospho-L-seryl-[protein] + ADP + H(+). It carries out the reaction L-threonyl-[protein] + ATP = O-phospho-L-threonyl-[protein] + ADP + H(+). The catalysed reaction is L-tyrosyl-[protein] + ATP = O-phospho-L-tyrosyl-[protein] + ADP + H(+). With respect to regulation, regulates splicing of its own pre-mRNA according to its kinase activity; increased expression of the catalytically active form influences splicing to generate the catalytically inactive splicing variant lacking the kinase domain. Leucettine L41 inhibits its kinase activity and affects the regulation of alternative splicing mediated by phosphorylation of SR proteins. Dual specificity kinase acting on both serine/threonine and tyrosine-containing substrates. Phosphorylates serine- and arginine-rich (SR) proteins of the spliceosomal complex and may be a constituent of a network of regulatory mechanisms that enable SR proteins to control RNA splicing. Phosphorylates: SRSF1, SRSF3 and PTPN1. Regulates the alternative splicing of tissue factor (F3) pre-mRNA in endothelial cells. The chain is Dual specificity protein kinase CLK1 from Homo sapiens (Human).